The primary structure comprises 343 residues: Twinfilin (343 aa).

2 ADF-H domains span residues 11 to 135 (EQLA…EGYR) and 184 to 312 (EATV…DELH). The tract at residues 319-343 (RPAFAKPKGPPNRGAKRLTRPTAED) is disordered.

The protein belongs to the actin-binding proteins ADF family. Twinfilin subfamily. In terms of assembly, interacts with G-actin; ADP-actin form.

The protein localises to the cytoplasm. The protein resides in the cytoskeleton. It is found in the cell cortex. Its function is as follows. Actin-binding protein involved in motile and morphological processes. Inhibits actin polymerization, likely by sequestering G-actin. This chain is Twinfilin (twf), found in Drosophila melanogaster (Fruit fly).